The following is a 275-amino-acid chain: Formamidopyrimidine-DNA glycosylase (275 aa).

Residue Pro2 is the Schiff-base intermediate with DNA of the active site. The active-site Proton donor is the Glu3. The active-site Proton donor; for beta-elimination activity is Lys58. The DNA site is built by His91, Arg109, and Arg154. The segment at 240 to 274 adopts an FPG-type zinc-finger fold; that stretch reads AVYERAGLPCRVCGTPIRRLVQGQRATYYCPSCQK. Arg264 acts as the Proton donor; for delta-elimination activity in catalysis.

This sequence belongs to the FPG family. Monomer. Zn(2+) serves as cofactor.

The catalysed reaction is Hydrolysis of DNA containing ring-opened 7-methylguanine residues, releasing 2,6-diamino-4-hydroxy-5-(N-methyl)formamidopyrimidine.. The enzyme catalyses 2'-deoxyribonucleotide-(2'-deoxyribose 5'-phosphate)-2'-deoxyribonucleotide-DNA = a 3'-end 2'-deoxyribonucleotide-(2,3-dehydro-2,3-deoxyribose 5'-phosphate)-DNA + a 5'-end 5'-phospho-2'-deoxyribonucleoside-DNA + H(+). Functionally, involved in base excision repair of DNA damaged by oxidation or by mutagenic agents. Acts as a DNA glycosylase that recognizes and removes damaged bases. Has a preference for oxidized purines, such as 7,8-dihydro-8-oxoguanine (8-oxoG). Has AP (apurinic/apyrimidinic) lyase activity and introduces nicks in the DNA strand. Cleaves the DNA backbone by beta-delta elimination to generate a single-strand break at the site of the removed base with both 3'- and 5'-phosphates. This is Formamidopyrimidine-DNA glycosylase from Bordetella petrii (strain ATCC BAA-461 / DSM 12804 / CCUG 43448).